A 243-amino-acid polypeptide reads, in one-letter code: Carboxy-S-adenosyl-L-methionine synthase (243 aa).

S-adenosyl-L-methionine-binding positions include tyrosine 39, 64 to 66 (GCS), 90 to 91 (DN), 118 to 119 (DL), asparagine 133, and arginine 200.

The protein belongs to the class I-like SAM-binding methyltransferase superfamily. Cx-SAM synthase family. Homodimer.

It carries out the reaction prephenate + S-adenosyl-L-methionine = carboxy-S-adenosyl-L-methionine + 3-phenylpyruvate + H2O. Catalyzes the conversion of S-adenosyl-L-methionine (SAM) to carboxy-S-adenosyl-L-methionine (Cx-SAM). The protein is Carboxy-S-adenosyl-L-methionine synthase of Idiomarina loihiensis (strain ATCC BAA-735 / DSM 15497 / L2-TR).